The primary structure comprises 110 residues: U1-lycotoxin-Ls1cc (110 aa).

An N-terminal signal peptide occupies residues 1–20 (MKFVLLFGVLLVTLFSYSSA). A propeptide spanning residues 21–44 (EMLDDFDQADEDELLSLIEKEEAR) is cleaved from the precursor. 4 disulfide bridges follow: Cys-47–Cys-62, Cys-54–Cys-71, Cys-61–Cys-89, and Cys-73–Cys-87.

Belongs to the neurotoxin 19 (CSTX) family. 03 subfamily. Expressed by the venom gland.

It is found in the secreted. The chain is U1-lycotoxin-Ls1cc from Lycosa singoriensis (Wolf spider).